The chain runs to 425 residues: Riboflavin biosynthesis protein RibBA (425 aa).

Positions 1 to 204 (MTRLDSVERA…IADLIEWRRK (204 aa)) are DHBP synthase. D-ribulose 5-phosphate is bound by residues 28-29 (RE), Asp33, 141-145 (RPGHT), and Glu165. A Mg(2+)-binding site is contributed by Glu29. His144 is a binding site for Mg(2+). Positions 205–425 (HEKHIERIAE…HLPGEFGGAL (221 aa)) are GTP cyclohydrolase II. Residue 259-263 (RVHSE) participates in GTP binding. Zn(2+)-binding residues include Cys264, Cys275, and Cys277. Residues Gln280, 303–305 (EGR), and Thr325 each bind GTP. The active-site Proton acceptor; for GTP cyclohydrolase activity is the Asp337. Residue Arg339 is the Nucleophile; for GTP cyclohydrolase activity of the active site. Thr360 and Lys365 together coordinate GTP.

The protein in the N-terminal section; belongs to the DHBP synthase family. It in the C-terminal section; belongs to the GTP cyclohydrolase II family. Requires Mg(2+) as cofactor. Mn(2+) is required as a cofactor. It depends on Zn(2+) as a cofactor.

It catalyses the reaction D-ribulose 5-phosphate = (2S)-2-hydroxy-3-oxobutyl phosphate + formate + H(+). The enzyme catalyses GTP + 4 H2O = 2,5-diamino-6-hydroxy-4-(5-phosphoribosylamino)-pyrimidine + formate + 2 phosphate + 3 H(+). The protein operates within cofactor biosynthesis; riboflavin biosynthesis; 2-hydroxy-3-oxobutyl phosphate from D-ribulose 5-phosphate: step 1/1. It participates in cofactor biosynthesis; riboflavin biosynthesis; 5-amino-6-(D-ribitylamino)uracil from GTP: step 1/4. Its function is as follows. Catalyzes the conversion of D-ribulose 5-phosphate to formate and 3,4-dihydroxy-2-butanone 4-phosphate. In terms of biological role, catalyzes the conversion of GTP to 2,5-diamino-6-ribosylamino-4(3H)-pyrimidinone 5'-phosphate (DARP), formate and pyrophosphate. This is Riboflavin biosynthesis protein RibBA from Mycolicibacterium paratuberculosis (strain ATCC BAA-968 / K-10) (Mycobacterium paratuberculosis).